We begin with the raw amino-acid sequence, 94 residues long: Histone-like DNA-binding protein (94 aa).

It belongs to the bacterial histone-like protein family.

In Rickettsia bellii (strain RML369-C), this protein is Histone-like DNA-binding protein.